We begin with the raw amino-acid sequence, 245 residues long: MPFDPAFLWQTFVALLSGIPLALQLAVFSVALGTVLAFGLALMRVSRLWWLDLPARFYIFAFRGTPLLVQIYIIYYGLSQFPDVRHSFIWPFLRDAYWCAMAALALNTAAYTAEIMRGGLLSVPAGQIEAAKACGMGRVKLFRRIVIPQAIRQMLPGYSNEVILMVKSTSLASTITIMEITGIAAKLISESYRTVEVFSCAGAIYLILNFIVARLFTLLEWALWPERRNNRLTTDPVDRKGELHA.

The next 5 helical transmembrane spans lie at 12-32 (FVAL…SVAL), 57-77 (FYIF…IYYG), 96-116 (AYWC…AEIM), 163-183 (ILMV…ITGI), and 204-224 (IYLI…WALW). The region spanning 19–216 (IPLALQLAVF…ILNFIVARLF (198 aa)) is the ABC transmembrane type-1 domain.

Belongs to the binding-protein-dependent transport system permease family. HisMQ subfamily.

It is found in the cell inner membrane. Its function is as follows. Component of the octopine active transport system probably consisting of four subunits: Q, M, P and T. This Rhizobium radiobacter (Agrobacterium tumefaciens) protein is Octopine transport system permease protein OccM (occM).